Here is a 74-residue protein sequence, read N- to C-terminus: Acyclotide phyb-K (74 aa).

An N-terminal signal peptide occupies residues 1–24; the sequence is MARVNSLKCALCFIVLILFVQLNC. A propeptide spanning residues 25–43 is cleaved from the precursor; the sequence is IPETRVMAVELSRVFLQTS. Cystine bridges form between C47/C64, C51/C66, and C56/C71.

Contains 3 disulfide bonds. Expressed in midvein, lamina and periphery of leaves (at protein level).

Its function is as follows. Probably participates in a plant defense mechanism. This Petunia hybrida (Petunia) protein is Acyclotide phyb-K.